Consider the following 84-residue polypeptide: Omega-conotoxin-like ArMKLT1-02 (84 aa).

An N-terminal signal peptide occupies residues 1–22 (MKVTCMMIVAVLFLTAWTFVTA). Residues 23–51 (DDSISALEDLFAKAHDKMENSEASPLNER) constitute a propeptide that is removed on maturation. 3 disulfides stabilise this stretch: Cys53/Cys71, Cys60/Cys75, and Cys70/Cys79.

Belongs to the conotoxin O1 superfamily. Expressed by the venom duct.

The protein resides in the secreted. Its function is as follows. Omega-conotoxins act at presynaptic membranes, they bind and block voltage-gated calcium channels (Cav). This chain is Omega-conotoxin-like ArMKLT1-02, found in Conus arenatus (Sand-dusted cone).